The sequence spans 154 residues: Ribosome maturation factor RimP (154 aa).

Belongs to the RimP family.

The protein localises to the cytoplasm. Functionally, required for maturation of 30S ribosomal subunits. The chain is Ribosome maturation factor RimP from Thioalkalivibrio sulfidiphilus (strain HL-EbGR7).